Reading from the N-terminus, the 279-residue chain is Oxygen-dependent coproporphyrinogen-III oxidase (279 aa).

Residue S102 coordinates substrate. A divalent metal cation is bound by residues H106 and H116. The active-site Proton donor is H116. 118–120 (NTR) lines the substrate pocket. Positions 149 and 179 each coordinate a divalent metal cation. The tract at residues 244–279 (YVEFNLLYDRGTKFGLMTDGNVEAILMSLPPEVKFN) is important for dimerization.

Belongs to the aerobic coproporphyrinogen-III oxidase family. As to quaternary structure, homodimer. The cofactor is a divalent metal cation.

The protein localises to the cytoplasm. The enzyme catalyses coproporphyrinogen III + O2 + 2 H(+) = protoporphyrinogen IX + 2 CO2 + 2 H2O. It participates in porphyrin-containing compound metabolism; protoporphyrin-IX biosynthesis; protoporphyrinogen-IX from coproporphyrinogen-III (O2 route): step 1/1. Functionally, involved in the heme biosynthesis. Catalyzes the aerobic oxidative decarboxylation of propionate groups of rings A and B of coproporphyrinogen-III to yield the vinyl groups in protoporphyrinogen-IX. The polypeptide is Oxygen-dependent coproporphyrinogen-III oxidase (Rickettsia africae (strain ESF-5)).